The sequence spans 473 residues: Hyaluronidase-2 (473 aa).

The first 20 residues, 1 to 20 (MRAGPGPTVTLALVLAVSWA), serve as a signal peptide directing secretion. Disulfide bonds link Cys-47–Cys-340 and Cys-211–Cys-227. 2 N-linked (GlcNAc...) asparagine glycosylation sites follow: Asn-74 and Asn-103. Glu-135 serves as the catalytic Proton donor. Asn-357 carries N-linked (GlcNAc...) asparagine glycosylation. Positions 361–439 (ATQYCSRAQC…YLGWSGEQCQ (79 aa)) constitute an EGF-like domain. 3 disulfides stabilise this stretch: Cys-365/Cys-376, Cys-370/Cys-427, and Cys-429/Cys-438. Gly-448 carries the GPI-anchor amidated glycine lipid modification. A propeptide spans 449-473 (ASEAWAGSHLTSLLALAALAFTWTL) (removed in mature form).

It belongs to the glycosyl hydrolase 56 family. As to quaternary structure, interacts with MST1R. Widely expressed (at protein level).

Its subcellular location is the cell membrane. The enzyme catalyses Random hydrolysis of (1-&gt;4)-linkages between N-acetyl-beta-D-glucosamine and D-glucuronate residues in hyaluronate.. Functionally, catalyzes hyaluronan degradation into small fragments that are endocytosed and degraded in lysosomes by HYAL1 and exoglycosidases. Essential for the breakdown of extracellular matrix hyaluronan. The polypeptide is Hyaluronidase-2 (HYAL2) (Homo sapiens (Human)).